A 456-amino-acid polypeptide reads, in one-letter code: Chromosomal replication initiator protein DnaA (456 aa).

A domain I, interacts with DnaA modulators region spans residues 1-83; sequence MKLKILHFTS…DAFEEESNNG (83 aa). Positions 83 to 116 are domain II; that stretch reads GVRPEIHIKVKEKKENVKSLKNNKSMLYFNTNGL. The interval 117 to 331 is domain III, AAA+ region; the sequence is SLNPFYTFEN…GILSTINAHI (215 aa). Positions 161, 163, 164, and 165 each coordinate ATP. The tract at residues 332–456 is domain IV, binds dsDNA; sequence NLSPESSSLK…SKIQQSLDSV (125 aa).

This sequence belongs to the DnaA family. As to quaternary structure, oligomerizes as a right-handed, spiral filament on DNA at oriC.

It localises to the cytoplasm. Plays an essential role in the initiation and regulation of chromosomal replication. ATP-DnaA binds to the origin of replication (oriC) to initiate formation of the DNA replication initiation complex once per cell cycle. Binds the DnaA box (a 9 base pair repeat at the origin) and separates the double-stranded (ds)DNA. Forms a right-handed helical filament on oriC DNA; dsDNA binds to the exterior of the filament while single-stranded (ss)DNA is stabiized in the filament's interior. The ATP-DnaA-oriC complex binds and stabilizes one strand of the AT-rich DNA unwinding element (DUE), permitting loading of DNA polymerase. After initiation quickly degrades to an ADP-DnaA complex that is not apt for DNA replication. Binds acidic phospholipids. The polypeptide is Chromosomal replication initiator protein DnaA (Helicobacter hepaticus (strain ATCC 51449 / 3B1)).